The primary structure comprises 194 residues: ATP-dependent Clp protease proteolytic subunit (194 aa).

Ser-98 serves as the catalytic Nucleophile. His-123 is a catalytic residue.

This sequence belongs to the peptidase S14 family. In terms of assembly, fourteen ClpP subunits assemble into 2 heptameric rings which stack back to back to give a disk-like structure with a central cavity, resembling the structure of eukaryotic proteasomes.

The protein resides in the cytoplasm. It carries out the reaction Hydrolysis of proteins to small peptides in the presence of ATP and magnesium. alpha-casein is the usual test substrate. In the absence of ATP, only oligopeptides shorter than five residues are hydrolyzed (such as succinyl-Leu-Tyr-|-NHMec, and Leu-Tyr-Leu-|-Tyr-Trp, in which cleavage of the -Tyr-|-Leu- and -Tyr-|-Trp bonds also occurs).. In terms of biological role, cleaves peptides in various proteins in a process that requires ATP hydrolysis. Has a chymotrypsin-like activity. Plays a major role in the degradation of misfolded proteins. The sequence is that of ATP-dependent Clp protease proteolytic subunit from Actinobacillus succinogenes (strain ATCC 55618 / DSM 22257 / CCUG 43843 / 130Z).